We begin with the raw amino-acid sequence, 613 residues long: MAFNSTPPVSPGGEAQQRPPRFPGEDTTPTSQKEIWGWYAYGIAAEVFAVCGVGSFLPLTLEQLAREHGTLLSSHLPCVRFSSPSTAPGNGTTTATFRRDGTDNDQCVVSVLGLQVNTASFAMYTFSLAVLVQALTLISFSALADYENNRKTLLLAFGFIGSMTSMLFIFIAPPVYILASLLVVVGVTCLGSSFVVLNSFLPVLVANDPSIQTAHKEQGEELSPVNSNGEFVRFEDLDEEISRDSDDHFTTGHRPKTKAAGSASPELQLSTRISSKGVGLGYCAAVLVQILSILMLFALSKTSLPKISGTLPLRFVLLLVGIWWFSFTMVSRRWLRDRPGPPLASSKGAARNSRWRIWLRLIGFAWKSLWKTAKVAVKLREVIIFLIAWFLLSDAMATVSGTAILFARTELKMSTTAVGLLSITATLSGMAGAFLWPVVSRRLRLKSNHTIMLCIALFEVIPLYGMLAYIPLFKKWGVVGLQQPWEIFPLGIVHGLVSGGLSSYCRSFFGLLIPPGSEAAFYALYAATDKGSSFIGPAIVGMLIDATGQVRSGFFFIAVLILLPIPLIWMVNAEKGRQDGLAMADILEKSHREHASEYGGPSEEAEGLLARDI.

The tract at residues 1-30 (MAFNSTPPVSPGGEAQQRPPRFPGEDTTPT) is disordered. A helical membrane pass occupies residues 41–61 (YGIAAEVFAVCGVGSFLPLTL). A glycan (N-linked (GlcNAc...) asparagine) is linked at Asn90. The next 7 helical transmembrane spans lie at 120–140 (SFAM…LISF), 167–187 (LFIF…VVGV), 189–209 (CLGS…ANDP), 278–298 (VGLG…MLFA), 307–327 (ISGT…WFSF), 382–402 (VIIF…VSGT), and 418–438 (VGLL…LWPV). N-linked (GlcNAc...) asparagine glycosylation is present at Asn448. The next 4 membrane-spanning stretches (helical) occupy residues 453 to 473 (LCIA…IPLF), 477 to 497 (GVVG…HGLV), 508 to 528 (FFGL…YAAT), and 553 to 573 (GFFF…MVNA). Residues 592-613 (REHASEYGGPSEEAEGLLARDI) form a disordered region.

The protein belongs to the ATG22 family.

It is found in the vacuole membrane. In terms of biological role, vacuolar effluxer which mediate the efflux of amino acids resulting from autophagic degradation. The release of autophagic amino acids allows the maintenance of protein synthesis and viability during nitrogen starvation. The sequence is that of Autophagy-related protein 22-2 (atg22-2) from Aspergillus fumigatus (strain ATCC MYA-4609 / CBS 101355 / FGSC A1100 / Af293) (Neosartorya fumigata).